Here is a 141-residue protein sequence, read N- to C-terminus: Short-chain diamines transporter (141 aa).

Helical transmembrane passes span 16–36 (VILL…PLEV), 39–59 (TLGI…NHFF), 76–96 (ILHA…MVAY), and 103–123 (WQAI…TFIF).

This sequence belongs to the proteobacterial antimicrobial compound efflux (PACE) (TC 2.A.117) family.

It is found in the cell inner membrane. In terms of biological role, mediates the efflux of short-chain diamines when energized by an electrochemical gradient. Involved in resistance to the synthetic biocide chlorhexidine, a widely used antiseptic and disinfectant in both hospital and community settings. Interacts directly with chlorhexidine and mediates its efflux via an energy-dependent mechanism. The chain is Short-chain diamines transporter from Acinetobacter baylyi (strain ATCC 33305 / BD413 / ADP1).